A 257-amino-acid chain; its full sequence is Zinc finger protein 8 (257 aa).

Disordered stretches follow at residues 48–92 (GDNS…NNNN), 108–128 (QALG…KRGS), and 214–238 (GVYS…PNNW). Residues 50 to 65 (NSDNLSAEPSDHQTTT) are compositionally biased toward polar residues. Over residues 66-92 (KNDESSENIKDKDKEKDKDKDKDNNNN) the composition is skewed to basic and acidic residues. The C2H2-type zinc finger occupies 95-117 (FECHYCFRNFPTSQALGGHQNAH). The segment covering 115 to 126 (NAHKRERQHAKR) has biased composition (basic residues).

Expressed in developing cauline leaves.

Its subcellular location is the nucleus. Probable transcription factor required for the initiation of inflorescence trichomes in response to gibberellin and cytokinin. Is not involved in the regulation of trichome branching. Is functionally equivalent to GIS2. Acts as a negative regulator of abscisic acid (ABA) signaling during germination and early seedling development. The chain is Zinc finger protein 8 from Arabidopsis thaliana (Mouse-ear cress).